A 373-amino-acid polypeptide reads, in one-letter code: Envelope glycoprotein C homolog (373 aa).

The N-terminal stretch at 1-25 (MVSNMRSTRTALTGWVGIFLVLSLQ) is a signal peptide. The disordered stretch occupies residues 58 to 93 (EVPNSPTTELSTTVATKTAVPTTESTSSSEAHRNSS). Over residues 59–68 (VPNSPTTELS) the composition is skewed to polar residues. Positions 69–80 (TTVATKTAVPTT) are enriched in low complexity. N-linked (GlcNAc...) asparagine; by host glycans are attached at residues Asn-91, Asn-111, Asn-203, and Asn-345. The region spanning 249–347 (PASVDVLAPP…GDMISTSNAT (99 aa)) is the Ig-like domain.

Belongs to the herpesviridae glycoprotein C family.

The polypeptide is Envelope glycoprotein C homolog (gC) (Gallus gallus (Chicken)).